The chain runs to 163 residues: Protein LOL5 (163 aa).

2 stretches are compositionally biased toward polar residues: residues 1-25 and 33-44; these read MSQLPLASQATTTDLVSTTAMQPQS and LQPQHPPSSTAH. The tract at residues 1–51 is disordered; the sequence is MSQLPLASQATTTDLVSTTAMQPQSEGIVDESLQPQHPPSSTAHDSPCLQD. Putative zinc finger regions lie at residues 70–100 and 108–138; these read QMVCGSCRILLAYFRGAGYVHCTCCQTMNYV and KVHCGHCATLLMYPFGAPAVKCSLCLFVTEI.

Its subcellular location is the nucleus. Functionally, involved in plant growth and disease resistance. In Oryza sativa subsp. japonica (Rice), this protein is Protein LOL5 (LOL5).